A 125-amino-acid chain; its full sequence is Cytochrome c-556 (125 aa).

Residues Met13, Cys113, Cys116, and His117 each contribute to the heme site. Positions 13, 113, 116, and 117 each coordinate heme c.

Monomer. In terms of processing, binds 1 heme c group covalently per subunit.

Functionally, low-spin monoheme cytochrome c. The sequence is that of Cytochrome c-556 from Agrobacterium tumefaciens (strain apple 185).